The chain runs to 156 residues: Endoribonuclease YbeY (156 aa).

Residues His-122, His-126, and His-132 each contribute to the Zn(2+) site.

This sequence belongs to the endoribonuclease YbeY family. Zn(2+) serves as cofactor.

It is found in the cytoplasm. Its function is as follows. Single strand-specific metallo-endoribonuclease involved in late-stage 70S ribosome quality control and in maturation of the 3' terminus of the 16S rRNA. The sequence is that of Endoribonuclease YbeY from Bacillus cereus (strain G9842).